Here is a 131-residue protein sequence, read N- to C-terminus: MKHTELRAAVLDALEKHDTGATFFDGRPAVFDEADFPAVAVYLTGAEYTGEELDSDTWQAELHIEVFLPAQVPDSELDAWMESRIYPVMSDIPALSDLITSMVASGYDYRRDDDAGLWSSADLTYVITYEM.

The protein belongs to the lambda-like tail terminator protein family. In terms of assembly, homohexamer. May bind to major tail protein V, and /or tape measure protein.

It localises to the virion. The protein localises to the host cytoplasm. In terms of biological role, plays an essential role in tail assembly by capping the rapidly polymerizing tail once it has reached its requisite length and serving as the interaction surface for the completion protein. This is Tail tube terminator protein (U) from Escherichia phage lambda (Bacteriophage lambda).